The following is a 360-amino-acid chain: Phospho-N-acetylmuramoyl-pentapeptide-transferase (360 aa).

10 consecutive transmembrane segments (helical) span residues 3–23 (SILVGAAVALVVSILFTPYLI), 52–72 (MGGVAILVAMWAGYLVAHLTV), 81–101 (GLLVLGLTTALGIVGFLDDFI), 115–135 (AKLVGQLVASVLFAVLAMQFA), 153–173 (ITVISFGSVGFVIFAYIAISG), 187–207 (LAGGTAAMVLAIYVVISFWQF), 230–250 (IALVAGAAMAACVGFLWWNAA), 254–274 (IFMGDTGSLALGGLLAGLSMV), 282–302 (IIIGGLFVVEALSVVMQIVVF), and 333–353 (FWVLAAISAMFGLGLFYADWL).

The protein belongs to the glycosyltransferase 4 family. MraY subfamily. It depends on Mg(2+) as a cofactor.

Its subcellular location is the cell membrane. It catalyses the reaction UDP-N-acetyl-alpha-D-muramoyl-L-alanyl-gamma-D-glutamyl-meso-2,6-diaminopimeloyl-D-alanyl-D-alanine + di-trans,octa-cis-undecaprenyl phosphate = di-trans,octa-cis-undecaprenyl diphospho-N-acetyl-alpha-D-muramoyl-L-alanyl-D-glutamyl-meso-2,6-diaminopimeloyl-D-alanyl-D-alanine + UMP. It functions in the pathway cell wall biogenesis; peptidoglycan biosynthesis. In terms of biological role, catalyzes the initial step of the lipid cycle reactions in the biosynthesis of the cell wall peptidoglycan: transfers peptidoglycan precursor phospho-MurNAc-pentapeptide from UDP-MurNAc-pentapeptide onto the lipid carrier undecaprenyl phosphate, yielding undecaprenyl-pyrophosphoryl-MurNAc-pentapeptide, known as lipid I. This is Phospho-N-acetylmuramoyl-pentapeptide-transferase from Saccharopolyspora erythraea (strain ATCC 11635 / DSM 40517 / JCM 4748 / NBRC 13426 / NCIMB 8594 / NRRL 2338).